Reading from the N-terminus, the 754-residue chain is DNA topoisomerase 4 subunit A (754 aa).

A Topo IIA-type catalytic domain is found at 38 to 501 (LPHIGDGLKP…EARALSETEL (464 aa)). Tyr-127 serves as the catalytic O-(5'-phospho-DNA)-tyrosine intermediate.

Belongs to the type II topoisomerase GyrA/ParC subunit family. ParC type 1 subfamily. In terms of assembly, heterotetramer composed of ParC and ParE.

It localises to the cell membrane. The enzyme catalyses ATP-dependent breakage, passage and rejoining of double-stranded DNA.. Its function is as follows. Topoisomerase IV is essential for chromosome segregation. It relaxes supercoiled DNA. Performs the decatenation events required during the replication of a circular DNA molecule. The protein is DNA topoisomerase 4 subunit A of Pseudomonas aeruginosa (strain ATCC 15692 / DSM 22644 / CIP 104116 / JCM 14847 / LMG 12228 / 1C / PRS 101 / PAO1).